The following is a 414-amino-acid chain: 2,3-bisphosphoglycerate-independent phosphoglycerate mutase (414 aa).

This sequence belongs to the BPG-independent phosphoglycerate mutase family. A-PGAM subfamily.

The catalysed reaction is (2R)-2-phosphoglycerate = (2R)-3-phosphoglycerate. Its pathway is carbohydrate degradation; glycolysis; pyruvate from D-glyceraldehyde 3-phosphate: step 3/5. Catalyzes the interconversion of 2-phosphoglycerate and 3-phosphoglycerate. The polypeptide is 2,3-bisphosphoglycerate-independent phosphoglycerate mutase (Saccharolobus solfataricus (strain ATCC 35092 / DSM 1617 / JCM 11322 / P2) (Sulfolobus solfataricus)).